The primary structure comprises 226 residues: DNA mismatch repair protein MutH (226 aa).

This sequence belongs to the MutH family.

Its subcellular location is the cytoplasm. Functionally, sequence-specific endonuclease that cleaves unmethylated GATC sequences. It is involved in DNA mismatch repair. The sequence is that of DNA mismatch repair protein MutH from Actinobacillus pleuropneumoniae serotype 5b (strain L20).